Consider the following 417-residue polypeptide: Serine hydroxymethyltransferase (417 aa).

(6S)-5,6,7,8-tetrahydrofolate is bound by residues Leu117 and 121–123 (GHL). Lys226 carries the post-translational modification N6-(pyridoxal phosphate)lysine.

It belongs to the SHMT family. Homodimer. It depends on pyridoxal 5'-phosphate as a cofactor.

Its subcellular location is the cytoplasm. The catalysed reaction is (6R)-5,10-methylene-5,6,7,8-tetrahydrofolate + glycine + H2O = (6S)-5,6,7,8-tetrahydrofolate + L-serine. Its pathway is one-carbon metabolism; tetrahydrofolate interconversion. It functions in the pathway amino-acid biosynthesis; glycine biosynthesis; glycine from L-serine: step 1/1. Catalyzes the reversible interconversion of serine and glycine with tetrahydrofolate (THF) serving as the one-carbon carrier. This reaction serves as the major source of one-carbon groups required for the biosynthesis of purines, thymidylate, methionine, and other important biomolecules. Also exhibits THF-independent aldolase activity toward beta-hydroxyamino acids, producing glycine and aldehydes, via a retro-aldol mechanism. The chain is Serine hydroxymethyltransferase from Shouchella clausii (strain KSM-K16) (Alkalihalobacillus clausii).